The chain runs to 128 residues: Sulfurtransferase TusD (128 aa).

The active-site Cysteine persulfide intermediate is Cys-78.

This sequence belongs to the DsrE/TusD family. As to quaternary structure, heterohexamer, formed by a dimer of trimers. The hexameric TusBCD complex contains 2 copies each of TusB, TusC and TusD. The TusBCD complex interacts with TusE.

The protein resides in the cytoplasm. Its function is as follows. Part of a sulfur-relay system required for 2-thiolation of 5-methylaminomethyl-2-thiouridine (mnm(5)s(2)U) at tRNA wobble positions. Accepts sulfur from TusA and transfers it in turn to TusE. The polypeptide is Sulfurtransferase TusD (Salmonella newport (strain SL254)).